Here is a 979-residue protein sequence, read N- to C-terminus: Translation initiation factor IF-2 (979 aa).

Positions 68-386 are disordered; that stretch reads VKQKQGTPAS…DKRDAASRAA (319 aa). Basic and acidic residues-rich tracts occupy residues 102–179, 217–229, and 260–273; these read QDMR…KPEE, EMEK…EVFR, and TKED…DADG. The segment covering 317–326 has biased composition (polar residues); the sequence is RPAQQQSNAS. Basic and acidic residues predominate over residues 347–356; the sequence is DVQRQVKETL. In terms of domain architecture, tr-type G spans 478–646; it reads ARPPIVTVMG…KVLLEADILE (169 aa). The tract at residues 487 to 494 is G1; it reads GHVDHGKT. A GTP-binding site is contributed by 487 to 494; it reads GHVDHGKT. A G2 region spans residues 512–516; that stretch reads GITQH. The tract at residues 534-537 is G3; it reads DTPG. GTP-binding positions include 534-538 and 588-591; these read DTPGH and NKID. Residues 588-591 are G4; it reads NKID. Residues 624–626 form a G5 region; it reads SAK.

Belongs to the TRAFAC class translation factor GTPase superfamily. Classic translation factor GTPase family. IF-2 subfamily.

The protein localises to the cytoplasm. Its function is as follows. One of the essential components for the initiation of protein synthesis. Protects formylmethionyl-tRNA from spontaneous hydrolysis and promotes its binding to the 30S ribosomal subunits. Also involved in the hydrolysis of GTP during the formation of the 70S ribosomal complex. This chain is Translation initiation factor IF-2, found in Porphyromonas gingivalis (strain ATCC BAA-308 / W83).